We begin with the raw amino-acid sequence, 332 residues long: Holliday junction branch migration complex subunit RuvB (332 aa).

Residues methionine 1–tyrosine 181 form a large ATPase domain (RuvB-L) region. Positions 20, 21, 62, 65, 66, 67, 171, 181, and 218 each coordinate ATP. Threonine 66 is a binding site for Mg(2+). The small ATPAse domain (RuvB-S) stretch occupies residues asparagine 182–glycine 252. Residues serine 255–isoleucine 332 form a head domain (RuvB-H) region. DNA contacts are provided by arginine 291, arginine 310, and arginine 315.

The protein belongs to the RuvB family. In terms of assembly, homohexamer. Forms an RuvA(8)-RuvB(12)-Holliday junction (HJ) complex. HJ DNA is sandwiched between 2 RuvA tetramers; dsDNA enters through RuvA and exits via RuvB. An RuvB hexamer assembles on each DNA strand where it exits the tetramer. Each RuvB hexamer is contacted by two RuvA subunits (via domain III) on 2 adjacent RuvB subunits; this complex drives branch migration. In the full resolvosome a probable DNA-RuvA(4)-RuvB(12)-RuvC(2) complex forms which resolves the HJ.

It localises to the cytoplasm. It catalyses the reaction ATP + H2O = ADP + phosphate + H(+). The RuvA-RuvB-RuvC complex processes Holliday junction (HJ) DNA during genetic recombination and DNA repair, while the RuvA-RuvB complex plays an important role in the rescue of blocked DNA replication forks via replication fork reversal (RFR). RuvA specifically binds to HJ cruciform DNA, conferring on it an open structure. The RuvB hexamer acts as an ATP-dependent pump, pulling dsDNA into and through the RuvAB complex. RuvB forms 2 homohexamers on either side of HJ DNA bound by 1 or 2 RuvA tetramers; 4 subunits per hexamer contact DNA at a time. Coordinated motions by a converter formed by DNA-disengaged RuvB subunits stimulates ATP hydrolysis and nucleotide exchange. Immobilization of the converter enables RuvB to convert the ATP-contained energy into a lever motion, pulling 2 nucleotides of DNA out of the RuvA tetramer per ATP hydrolyzed, thus driving DNA branch migration. The RuvB motors rotate together with the DNA substrate, which together with the progressing nucleotide cycle form the mechanistic basis for DNA recombination by continuous HJ branch migration. Branch migration allows RuvC to scan DNA until it finds its consensus sequence, where it cleaves and resolves cruciform DNA. This chain is Holliday junction branch migration complex subunit RuvB, found in Fusobacterium nucleatum subsp. nucleatum (strain ATCC 25586 / DSM 15643 / BCRC 10681 / CIP 101130 / JCM 8532 / KCTC 2640 / LMG 13131 / VPI 4355).